A 90-amino-acid chain; its full sequence is Co-chaperonin GroES (90 aa).

Belongs to the GroES chaperonin family. Heptamer of 7 subunits arranged in a ring. Interacts with the chaperonin GroEL.

It is found in the cytoplasm. Functionally, together with the chaperonin GroEL, plays an essential role in assisting protein folding. The GroEL-GroES system forms a nano-cage that allows encapsulation of the non-native substrate proteins and provides a physical environment optimized to promote and accelerate protein folding. GroES binds to the apical surface of the GroEL ring, thereby capping the opening of the GroEL channel. The chain is Co-chaperonin GroES from Thermosipho melanesiensis (strain DSM 12029 / CIP 104789 / BI429).